Reading from the N-terminus, the 778-residue chain is Ribosome biogenesis protein BOP1 homolog (778 aa).

The span at 1-10 shows a compositional bias: basic residues; the sequence is MAKKQDRKRK. The disordered stretch occupies residues 1–152; that stretch reads MAKKQDRKRK…DSDTSDEEDI (152 aa). 3 stretches are compositionally biased toward acidic residues: residues 44–53, 60–72, and 84–105; these read EDSTDDEGID, SSED…DEEG, and SSDE…DEEE. Residues 114 to 124 show a composition bias toward polar residues; sequence TTSSKAETNNE. Acidic residues predominate over residues 142–151; it reads EDSDTSDEED. 7 WD repeats span residues 438-479, 481-519, 564-606, 609-647, 650-689, 693-732, and 748-778; these read GHTD…RTIE, EDVV…KLLI, NHFK…SQIP, KSKG…LIKK, TNSK…KPYQ, LHRN…DLLQ, and RDDF…RLYT.

This sequence belongs to the WD repeat BOP1/ERB1 family.

The protein localises to the nucleus. It is found in the nucleolus. The protein resides in the nucleoplasm. In terms of biological role, required for maturation of ribosomal RNAs and formation of the large ribosomal subunit. The protein is Ribosome biogenesis protein BOP1 homolog of Drosophila willistoni (Fruit fly).